The following is a 344-amino-acid chain: Axoneme-associated protein mst101(1) (344 aa).

12 consecutive repeat copies span residues 74–89 (KKKC…EAAE), 90–105 (KKKC…EAAE), 106–121 (KKKC…EAAE), 122–137 (KKKC…EAAE), 138–153 (KKKC…EAAE), 154–169 (KKKC…EAAE), 170–185 (KKKC…CAEL), 186–201 (AKKE…CAEA), 202–217 (AKKE…CEER), 218–233 (AKKE…CEER), 234–249 (AKKE…CAEA), and 250–265 (AKKE…CAEA). Positions 74–344 (KKKCAEAAKK…AAQKKCEPKK (271 aa)) are 17 X 16 AA approximate tandem repeats of K-K-K-C-X-E-X-A-[KQ]-K-X-X-E-X-A-X. Positions 206–244 (KEAAEKKKCEERAKKEKEAAEKKKCEERAKKEKEAAEKK) are disordered. Residues 266 to 281 (AQKKKCAELAKKAKEA) form a 13; approximate repeat. The stretch at 282 to 297 (AEKKKCAKKAGEKGSK) is one 14; approximate repeat. The segment covering 285–315 (KKCAKKAGEKGSKQSGSDKGKKNGKKNDMKN) has biased composition (basic and acidic residues). Residues 285-318 (KKCAKKAGEKGSKQSGSDKGKKNGKKNDMKNKCA) form a disordered region. Residues 298-313 (QSGSDKGKKNGKKNDM) form a 15; approximate repeat. The stretch at 314-329 (KNKCAMLAKKAKEEAL) is repeat 16. The stretch at 330 to 344 (KKKCAAAQKKCEPKK) is one 17; truncated repeat.

Testis. Located in spermatocytes and spermatid bundles.

The protein resides in the cytoplasm. Possible structural role in the sperm tail. It is associated with axonemal structures. The chain is Axoneme-associated protein mst101(1) (mst101(1)) from Drosophila hydei (Fruit fly).